Here is a 428-residue protein sequence, read N- to C-terminus: G2/mitotic-specific cyclin-1 (428 aa).

Residues 1 to 22 (MKFSEEKNVSNNPTNFEGGLDS) form a disordered region.

This sequence belongs to the cyclin family. Cyclin AB subfamily. In terms of assembly, interacts with the CDC2 protein kinase to form a serine/threonine kinase holoenzyme complex also known as maturation promoting factor (MPF). The cyclin subunit imparts substrate specificity to the complex.

Essential for the control of the cell cycle at the G2/M (mitosis) transition. The protein is G2/mitotic-specific cyclin-1 of Medicago sativa subsp. varia (Alfalfa).